Here is a 340-residue protein sequence, read N- to C-terminus: Tartrate-resistant acid phosphatase type 5 (340 aa).

Residues 1 to 20 (MDTWTVLLILQASLVLPGAV) form the signal peptide. Positions 41, 79, 82, and 118 each coordinate Fe cation. Residues N124 and N155 are each glycosylated (N-linked (GlcNAc...) asparagine). C169 and C227 form a disulfide bridge. Residues H213, H248, and H250 each contribute to the Fe cation site.

The cofactor is Fe cation.

The protein resides in the secreted. The enzyme catalyses a phosphate monoester + H2O = an alcohol + phosphate. Functionally, uteroferrin is a phosphoprotein phosphatase, synthesized in response to progesterone. It appears to function in transplacental transport of iron in pig. This Sus scrofa (Pig) protein is Tartrate-resistant acid phosphatase type 5 (ACP5).